A 484-amino-acid polypeptide reads, in one-letter code: Trigger factor (484 aa).

The 82-residue stretch at 162 to 243 (GDFISIDLSA…VKSVKERELP (82 aa)) folds into the PPIase FKBP-type domain. A disordered region spans residues 427–484 (DGNTIDTSEFFGKPPENDVTDLLDDDADGDAGVDADGDTENSAEPADADSADAAQGAG). The span at 444-476 (DVTDLLDDDADGDAGVDADGDTENSAEPADADS) shows a compositional bias: acidic residues.

The protein belongs to the FKBP-type PPIase family. Tig subfamily.

Its subcellular location is the cytoplasm. It carries out the reaction [protein]-peptidylproline (omega=180) = [protein]-peptidylproline (omega=0). Involved in protein export. Acts as a chaperone by maintaining the newly synthesized protein in an open conformation. Functions as a peptidyl-prolyl cis-trans isomerase. The chain is Trigger factor from Mycobacterium marinum (strain ATCC BAA-535 / M).